A 29-amino-acid chain; its full sequence is Conotoxin SIVC (29 aa).

Position 1 is an N-acetylalanine; partial (alanine 1). At proline 2 the chain carries 4-hydroxyproline. Residues threonine 7 and threonine 9 are each glycosylated (O-linked (HexNAc...) threonine). Proline 18 and proline 22 each carry 4-hydroxyproline. The residue at position 29 (cysteine 29) is a Cysteine amide.

The protein belongs to the conotoxin A superfamily. O-linked glycans consist of Hex4-HexNAc2 hexasaccharides. In terms of processing, N-terminus is found to be free and N-acetylated, depending on the fraction studied. Post-translationally, contains 3 disulfide bonds. Expressed by the venom duct. Low expression in the distal venom duct sections.

The protein localises to the secreted. In terms of biological role, probable neurotoxin with ion channel inhibitor activity. The polypeptide is Conotoxin SIVC (Conus striatus (Striated cone)).